We begin with the raw amino-acid sequence, 1596 residues long: MTSIKTEMPPLHAAEALASSSATDSGGGGAGGGGGGGGGGSGGPGAGGTGGVGSAPATPNATISAAADSSDNQPGTPQPTQQQQSTQQQLQQPQSQQQQQQAMGGGDPQQQQQQQQVTGITHQPYATHHMYSASGGQQQQQQQIYGGLYGGDMQQQQGYASSYINSYEQFYQQQQQQQQGTDYAFGTVGVDYGKSAGVRYHPYLQTPTSGLGGIPTASSAQEEAGSAPSAVSTTTAVAMSPRVVSSSSPTSTSSHLQLGSSSGQTPGSPGGAAGSAGCKLQCKKCGILTTNESELQEHIANVHGESPYGSSGYASSPYIKEEMPTPQPPGVGSATANPGELLDLDSQKMVYHQQLLQQQQQQHDVVAGLPLGALPDPLHSMQSMQQRALHSWEQQPQQTVASVEGLPPYMQQGLGVGLGVGVDKSPYYSPKQSPYHQSTGVGGATLIKQEYGGHGLIKSEYPDSQHYVDKSFDPTAGGAGGAELCASVATSPAEFPSTTTGGPGQEGAAGAAPGGGYRGFEPPSSSSVLPANSLTAKAATWKSNEARRPKTYNCTACNKWFTSSGHLKRHYNTTLHKNAVKSSGQPDPATLPISAHHHPARDPVTKPSRRGNAAAAAAAAAAAASASGQGQQQQPPIPPPPANVPPPEPPRSPPDYGGGGGLGVGAMGGAAMSQYSASPSPTQQQQHHLNHHQQQANGYANGTANGYGYMQQQVQSTTNASPQHASNNNSNNQQQQQQQQQHHQQQMPQHHNSVLNGHPNGLAGPSAPHNNNTTQMPSSQMRGLLNETTTTPPPTTTTRAPQITTTATTTTTAATTVAIKSEQMEDSNHTHTHTHTHPNHSHSQDRSHSSSSSSSMATEEAEEQELRDQEQADDHLHQHQQASQQYLLSARHYHSSTPNTLSSSNTNPSTPSSNSPHTIYRQEQQGTDFSRTTPPPQPLPPMGMLPPMAMDYNMLALDMPMPMPTLMHSNMLQCSSTSTTPLATTITTSMPDTMQPPQQQLVHHYQAVLHPLHQQLGEQHQRQEADHHQQQRELHQLDQQQQQQQALILADSLPHSSSSPTSSSPPPTMPMPLTTITAPQLLPLQPPPPHITSTMPMPPTMHMPIMPPPPQCYQQLQPLDPTMSYHTIIGSGPEAHTGTAGGGYSNQITTSDGQILQLMPTSLFAPYAPLSPYSVAAQRSPQEGDLPPVHTLTTALHAHQQGGQQEAQTPTLTVLSTPYSPTVSSSRATPALEMDMATLMQHHQDYEMEQYQMQHQQLDQMQQHQQQLDHQQQQQILADQTQTMAQQPLAKKRRGGNATPSTTKRRRNSSVGSTSPHSTTLPSGRIKCLECDKEFTKNCYLTQHNKSFHSGEYPFRCQKCGKRFQSEDVYTTHLGRHRTQDKPHKCELCPKQFHHKTDLRRHVEAIHTGLKQHMCDICEKGFCRKDHLRKHLETHNRPRVVGKKSAAAAAAAAAAAAVTATAGLGGAPAAGSIKAAFARSLTVTAVSSEPGAGVAIPSAPATATCAPVSVSASALVQAVNPSLTSGLSLKRHIDDVAVDDDSLLEEDEDEMEMEMEMDMLEEEDEEEEELGDHHMIIKSEYVQEEFQMIEKSIELY.

3 disordered regions span residues 1-143 (MTSI…QQQQ), 209-273 (SGLG…GGAA), and 490-530 (TSPA…SVLP). The segment covering 13–24 (AAEALASSSATD) has biased composition (low complexity). Over residues 25 to 53 (SGGGGAGGGGGGGGGGSGGPGAGGTGGVG) the composition is skewed to gly residues. Residues 60–72 (NATISAAADSSDN) are compositionally biased toward polar residues. 2 stretches are compositionally biased toward low complexity: residues 73–123 (QPGT…ITHQ) and 226–267 (SAPS…QTPG). A compositionally biased stretch (gly residues) spans 501–518 (GGPGQEGAAGAAPGGGYR). A C2H2-type 1 zinc finger spans residues 552-576 (YNCTACNKWFTSSGHLKRHYNTTLH). 4 disordered regions span residues 578–813 (NAVK…TTTA), 825–945 (EDSN…MGML), 1017–1074 (GEQH…MPLT), and 1252–1322 (QMQH…TTLP). Over residues 610–634 (RGNAAAAAAAAAAAASASGQGQQQQ) the composition is skewed to low complexity. The segment covering 635 to 653 (PPIPPPPANVPPPEPPRSP) has biased composition (pro residues). Over residues 656 to 668 (YGGGGGLGVGAMG) the composition is skewed to gly residues. Positions 673–682 (SQYSASPSPT) are enriched in polar residues. 2 stretches are compositionally biased toward low complexity: residues 683–709 (QQQQ…GYGY) and 719–753 (NASP…HHNS). Residues 768–781 (PHNNNTTQMPSSQM) are compositionally biased toward polar residues. Positions 796–813 (TTTRAPQITTTATTTTTA) are enriched in low complexity. Residues 830–840 (THTHTHTHPNH) show a composition bias toward basic residues. Residues 849–858 (SSSSSSSMAT) show a composition bias toward low complexity. The segment covering 864–877 (QELRDQEQADDHLH) has biased composition (basic and acidic residues). Residues 879–916 (HQQASQQYLLSARHYHSSTPNTLSSSNTNPSTPSSNSP) are compositionally biased toward low complexity. Residues 904–1297 (SNTNPSTPSS…PLAKKRRGGN (394 aa)) form a transactivation activation domain (TAD) region. The span at 921 to 932 (RQEQQGTDFSRT) shows a compositional bias: polar residues. A compositionally biased stretch (pro residues) spans 933 to 944 (TPPPQPLPPMGM). The span at 1019 to 1036 (QHQRQEADHHQQQRELHQ) shows a compositional bias: basic and acidic residues. Low complexity-rich tracts occupy residues 1037–1062 (LDQQ…SPTS) and 1252–1275 (QMQH…QQQQ). Polar residues-rich tracts occupy residues 1276–1286 (ILADQTQTMAQ) and 1309–1322 (SSVG…TTLP). A C2H2-type 2 zinc finger spans residues 1326 to 1349 (IKCLECDKEFTKNCYLTQHNKSFH). Residues 1355–1378 (FRCQKCGKRFQSEDVYTTHLGRHR) form a C2H2-type 3; degenerate zinc finger. 2 consecutive C2H2-type zinc fingers follow at residues 1384-1407 (HKCE…EAIH) and 1413-1435 (HMCD…LETH).

Zygotically expressed in the developing embryonic germ layers, nervous system, imaginal disk primordia and in larval wing and eye disks. As to expression, detected in the germline cells of the ovary, in unfertilized eggs and throughout early development. Later, it becomes mostly restricted to the nervous system and specific head regions. Also expressed in imaginal wing disks in third instar larvae.

It is found in the nucleus. The protein localises to the chromosome. Functionally, transcription factor required for zygotic genome activation (ZGA), a critical event in early embryonic development during which the developmental control passes from maternally provided mRNAs to the expression of the zygotic genome after fertilization. Binds to regulatory DNA sequences containing a 5'-CAGGTAG-3' sequence motif, which are highly enriched among developmental enhancers. Within 1 hour into development, or by the embryo's 8th nuclear cycle, binds the majority of its motifs genome-wide. Zelda-binding promotes nucleosome depletion and chromatin accessibility, thereby facilitating the binding of patterning transcription factors, including the binding of the dorsoventral patterning transcription factors dorsal (dl) and twist (twi), and the anteroposterior patterning transcription factors bicoid (bcd) and caudal (cad). Promotes the activity of patterning transcription factors, such as bcd and dl, by lowering the concentration threshold required for transcriptional activation. Required both for the earliest (minor) and major waves of transcription during ZGA. Also involved in maternal mRNA clearance during the maternal-to-zygote transition by promoting expression of microRNAs (miRNAs), such as miR-1, miR-9a and miR-309, which mediate degradation of maternally-loaded RNAs. Also involved in post-blastoderm development: nvolved in nervous system development by maintaining neuroblasts in an undifferentiated state and equired for wing disk development. In terms of biological role, constitutes the main isoform expressed throughout development. Transcription factor required for zygotic genome activation (ZGA). Acts as a dominant negative inhibitor of transcription factor activity of isoform A. This is Transcription factor Zelda from Drosophila melanogaster (Fruit fly).